We begin with the raw amino-acid sequence, 272 residues long: Protein UL11 (272 aa).

Positions 1–31 are cleaved as a signal peptide; that stretch reads MLFRYITFHREKVLYLTAACIFGVYISLHDA. Topologically, residues 32–224 are extracellular; it reads CIPVVGKIGT…PLQPSPQHQH (193 aa). N-linked (GlcNAc...) asparagine; by host glycosylation is found at Asn-42, Asn-93, Asn-100, and Asn-142. The interval 142–200 is disordered; that stretch reads NGTFPTTTTKKPTTTTRTTTTTTQRTTTTRTTTTAKKTTISTTHHKHPSPKKSTTPNSH. The span at 147 to 183 shows a compositional bias: low complexity; it reads TTTTKKPTTTTRTTTTTTQRTTTTRTTTTAKKTTIST. A helical transmembrane segment spans residues 225–245; the sequence is LATHALWVLAVVIVIIIIIIF. The Cytoplasmic portion of the chain corresponds to 246-272; the sequence is YFRIPQKLWLLWQHDKHGIVLIPQTDL.

This sequence belongs to the RL11 family. Interacts with host PTPRC; this interaction affects T-cell signaling. Glycosylated.

It is found in the host cell membrane. Its subcellular location is the host endoplasmic reticulum. In terms of biological role, plays a role in the modulation of host immune response by modulating T-cell function. Interacts with host PTPRC/CD45 and thereby reduces host TCR signaling and T-cell proliferation. This chain is Protein UL11 (UL11), found in Human cytomegalovirus (strain Merlin) (HHV-5).